A 353-amino-acid polypeptide reads, in one-letter code: Galectin-9 (353 aa).

The 131-residue stretch at 17–147 (FTGPIQGGLQ…CLKLSFITFQ (131 aa)) folds into the Galectin 1 domain. A beta-D-galactoside contacts are provided by residues Asn-47, His-60, Arg-64, Asn-74, and 81–87 (WGPEERK). The disordered stretch occupies residues 167-186 (QFPRTPKGRKQKTQNFRPAH). The Galectin 2 domain maps to 225-353 (FYTPIPNGLY…GDIQLTHVQT (129 aa)). A beta-D-galactoside-binding positions include His-265, Arg-269, Thr-279, and 285–291 (WGQEERS).

Homodimer. In terms of tissue distribution, accentuated expression in liver and thymus of embryo, detected in embryonic heart, brain, lung, liver, and kidney. Highly expressed in adult thymus, small intestine, and liver, and to a lesser extent in lung, kidney, spleen, cardiac, and skeletal muscle. Barely detectable in brain and reticulocyte. Expressed in placenta, uterus and decidua during pregnancy. Expressed in CD4+ T-cells with higher levels in iTreg cells than other T-cell types and sustained high levels throughout iTreg cell differentiation (at protein level). Expressed in myeloid cells in lung. Constitutively expressed in microglia. Isoform 1 is expressed exclusively in the small intestine. Isoform 2 expression in decidua increases in pathological pregnancy from gestation day 7.5 to 13.5 and it is higher than in normal pregnancy. Isoform 3 expression in decidua is higher in normal pregnancy than in pathological pregnancy.

The protein localises to the cytoplasm. It localises to the nucleus. The protein resides in the secreted. Functionally, binds galactosides. Has high affinity for the Forssman pentasaccharide. Ligand for HAVCR2/TIM3. Binding to HAVCR2 induces T-helper type 1 lymphocyte (Th1) death. Also stimulates bactericidal activity in infected macrophages by causing macrophage activation and IL1B secretion which restricts intracellular bacterial growth. Ligand for P4HB; the interaction retains P4HB at the cell surface of Th2 T-helper cells, increasing disulfide reductase activity at the plasma membrane, altering the plasma membrane redox state and enhancing cell migration. Ligand for CD44; the interaction enhances binding of SMAD3 to the FOXP3 promoter, leading to up-regulation of FOXP3 expression and increased induced regulatory T (iTreg) cell stability and suppressive function. Promotes ability of mesenchymal stromal cells to suppress T-cell proliferation. Expands regulatory T-cells and induces cytotoxic T-cell apoptosis following virus infection. Activates ERK1/2 phosphorylation inducing cytokine (IL-6, IL-8, IL-12) and chemokine (CCL2) production in mast and dendritic cells. Inhibits degranulation and induces apoptosis of mast cells. Induces maturation and migration of dendritic cells. Inhibits natural killer (NK) cell function. Can transform NK cell phenotype from peripheral to decidual during pregnancy. Astrocyte derived galectin-9 enhances microglial TNF production. May play a role in thymocyte-epithelial interactions relevant to the biology of the thymus. May provide the molecular basis for urate flux across cell membranes, allowing urate that is formed during purine metabolism to efflux from cells and serving as an electrogenic transporter that plays an important role in renal and gastrointestinal urate excretion. Highly selective to the anion urate. In terms of biological role, acts as an eosinophil chemoattractant. It also inhibits angiogenesis. Suppresses IFNG production by natural killer cells. This chain is Galectin-9 (Lgals9), found in Mus musculus (Mouse).